Here is a 260-residue protein sequence, read N- to C-terminus: 5'-nucleotidase SurE (260 aa).

A divalent metal cation-binding residues include aspartate 8, aspartate 9, serine 43, and asparagine 96.

It belongs to the SurE nucleotidase family. A divalent metal cation is required as a cofactor.

It localises to the cytoplasm. It catalyses the reaction a ribonucleoside 5'-phosphate + H2O = a ribonucleoside + phosphate. Its function is as follows. Nucleotidase that shows phosphatase activity on nucleoside 5'-monophosphates. The sequence is that of 5'-nucleotidase SurE from Ruegeria sp. (strain TM1040) (Silicibacter sp.).